A 534-amino-acid polypeptide reads, in one-letter code: 26S proteasome non-ATPase regulatory subunit 3 (534 aa).

Residues 1 to 16 (MKQEGSARRRGADKAK) are compositionally biased toward basic and acidic residues. The tract at residues 1-68 (MKQEGSARRR…AAEHSQRELD (68 aa)) is disordered. A compositionally biased stretch (pro residues) spans 17-32 (PPPGGGEQEPPPPPAP). A Glycyl lysine isopeptide (Lys-Gly) (interchain with G-Cter in SUMO1); alternate cross-link involves residue K38. K38 participates in a covalent cross-link: Glycyl lysine isopeptide (Lys-Gly) (interchain with G-Cter in SUMO2); alternate. Residues 49–61 (GETAGKTAAAAAE) show a composition bias toward low complexity. Residues 286 to 465 (ARYLYYTGRI…GYVQSKEMID (180 aa)) enclose the PCI domain. 2 positions are modified to phosphoserine: S418 and S430. The segment at 500-534 (SYNKDLESAEERREREQQDLEFAKEMAEDDDDSFP) is disordered. Positions 501 to 525 (YNKDLESAEERREREQQDLEFAKEM) are enriched in basic and acidic residues.

Belongs to the proteasome subunit S3 family. As to quaternary structure, component of the 19S proteasome regulatory particle complex. The 26S proteasome consists of a 20S core particle (CP) and two 19S regulatory subunits (RP). The regulatory particle is made of a lid composed of 9 subunits including PSMD3, a base containing 6 ATPases and few additional components. Interacts with UBQLN1 (via ubiquitin-like domain). Interacts with ERCC6.

In terms of biological role, component of the 26S proteasome, a multiprotein complex involved in the ATP-dependent degradation of ubiquitinated proteins. This complex plays a key role in the maintenance of protein homeostasis by removing misfolded or damaged proteins, which could impair cellular functions, and by removing proteins whose functions are no longer required. Therefore, the proteasome participates in numerous cellular processes, including cell cycle progression, apoptosis, or DNA damage repair. The protein is 26S proteasome non-ATPase regulatory subunit 3 (PSMD3) of Bos taurus (Bovine).